The primary structure comprises 901 residues: Nuclear factor of activated T-cells, cytoplasmic 4 (901 aa).

Disordered regions lie at residues 15–179 and 203–362; these read LVFG…LSSW and NEAA…EDSV. A compositionally biased stretch (pro residues) spans 61–81; sequence IPRPPPPRPGMHSPPPRPAPS. Residues 96 to 109 are compositionally biased toward gly residues; it reads GGPGGNAGGAGGGR. Residues 114–119 form a calcineurin-binding region; the sequence is PSIRIT. Over residues 114-123 the composition is skewed to low complexity; it reads PSIRITSISP. Residues 151–165 show a composition bias toward gly residues; it reads GFGGYREAGGQGGGA. Positions 166–179 are enriched in low complexity; that stretch reads FFSPSPGSSSLSSW. Phosphoserine; by MAPK7 and MAPK14 occurs at positions 168 and 170. 2 positions are modified to phosphoserine; by MAPK8 and MAPK9: S213 and S217. Residues 213–229 form an SP 1 repeat; it reads SPLPSPRASPRPWTPED. Residues 213–293 are 2 approximate SP repeats; that stretch reads SPLPSPRASP…LSRRGSLGEE (81 aa). 2 stretches are compositionally biased toward pro residues: residues 215 to 227 and 254 to 263; these read LPSP…PWTP and GPVPASPRPA. A Nuclear localization signal motif is present at residues 268 to 270; the sequence is KRR. Low complexity predominate over residues 272 to 288; sequence SSSGTPSSASPALSRRG. An SP 2; approximate repeat occupies 277-293; sequence PSSASPALSRRGSLGEE. Phosphoserine is present on S289. S334 carries the phosphoserine; by RPS6KA3 modification. The residue at position 344 (S344) is a Phosphoserine. In terms of domain architecture, RHD spans 401–582; it reads SALPPLDWPL…VPIECSQRSA (182 aa). A DNA-binding region spans residues 430–437; the sequence is RAHYETEG. Positions 586–683 constitute an IPT/TIG domain; that stretch reads PQVETYSPSA…KRSPTQSFKF (98 aa). A Nuclear localization signal motif is present at residues 672-674; it reads RRK. K689 is covalently cross-linked (Glycyl lysine isopeptide (Lys-Gly) (interchain with G-Cter in SUMO2)). Disordered regions lie at residues 695 to 721 and 827 to 869; these read DSSL…PRPP and PQSA…FRDS.

As to quaternary structure, member of the multicomponent NFATC transcription complex that consists of at least two components, a pre-existing cytoplasmic component NFATC2 and an inducible nuclear component NFATC1. Other NFAT proteins, such as NFATC3, or members of the activating protein-1 (AP-1) family and MAF can also bind the complex. NFAT proteins can bind DNA as monomers or dimers. Component of a promoter-binding complex composed of STAT3, NFATC3 and NFATC4; complex formation is enhanced by calcineurin. Interacts with CREBBP; this interaction potentiates transcription activation. Interacts with MAPK8/JNK1 and MAPK9/JNK2. Interacts with GATA4 (via the second Zn finger). Interacts (via N-terminus) with IRAK1 (via C-terminus). Interacts with RPS6KA3. Interacts with HOMER1, HOMER2 and HOMER3; this interaction competes with calcineurin/PPP3CA-binding and hence prevents NFATC4 dephosphorylation and activation. Interacts with ESR1 and ESR2; this interaction decreases NFATC4 transcriptional activity. Interacts with MTOR and MAPK7/ERK5. Interacts with TRIM17; this interaction prevents NFATC3 nuclear localization. Interacts with TCF25 (via C-terminus); the interaction leads to suppression of NFATC4 transcription factor activity and is reduced following stimulation with angiotensin-2. Phosphorylated by NFATC-kinases; dephosphorylated by calcineurin/PPP3CA. Phosphorylated on Ser-168 and Ser-170 by MTOR, IRAK1, MAPK7/ERK5 and MAPK14/p38, on Ser-213 and Ser-217 by MAPK8 and MAPK9, and on Ser-289 and Ser-344 by RPS6KA3. Phosphorylated by GSK3B. Phosphorylation by GSK3B markedly increases NFATC4 ubiquitination. Phosphorylation by MAPK8/JNK1, MAPK9/JNK2 and RPS6KA3 may stimulate NFATC4 transcriptional activity. Phosphorylation at Ser-168 and Ser-170 is stimulated by UV irradiation. In terms of processing, ubiquitinated, leading to degradation by the proteasome. Ubiquitination may be stimulated by GSK3B-dependent phosphorylation. Polyubiquitin linkage mainly occurs through 'Lys-48'. Widely expressed. In the brain, expressed in neurons. Expressed in the hippocampus (at protein level). In the hippocampus, expressed in both the CA1-CA3 pyramidal cells and the dentate gyrus granular cells. Expressed in a subset of hippocampal cells representing adult-born neurons (at protein level). Expressed in the submandibular gland (at protein level). In the olfactory system, expressed at low levels in the glomerular and granular layers and in the mitral cell layer. In the cerebellum, expressed at moderate levels in granular neurons. Expressed at moderate levels in the choroid plexus and ependymal cells. Expressed in neurons of the cochlear nucleus (at protein level). Expressed at low levels in the heart (at protein level). Expressed in ventricular cardiomyocytes (at protein level). Expressed in the lung.

The protein localises to the cytoplasm. Its subcellular location is the nucleus. In terms of biological role, ca(2+)-regulated transcription factor that is involved in several processes, including the development and function of the immune, cardiovascular, musculoskeletal, and nervous systems. Involved in T-cell activation, stimulating the transcription of cytokine genes, including that of IL2 and IL4. Following JAK/STAT signaling activation and as part of a complex with NFATC3 and STAT3, binds to the alpha-beta E4 promoter region of CRYAB and activates transcription in cardiomyocytes. Along with NFATC3, involved in embryonic heart development. Involved in mitochondrial energy metabolism required for cardiac morphogenesis and function. Transactivates many genes involved in heart physiology. Along with GATA4, binds to and activates NPPB/BNP promoter. Activates NPPA/ANP/ANF and MYH7/beta-MHC transcription. Binds to and transactivates AGTR2 gene promoter. Involved in the regulation of adult hippocampal neurogenesis. Involved in BDNF-driven pro-survival signaling in hippocampal adult-born neurons. Involved in the formation of long-term spatial memory and long-term potentiation. In cochlear nucleus neurons, may play a role in deafferentation-induced apoptosis during a developmental critical period when auditory neurons depend on afferent input for survival. Binds to and activates the BACE1/Beta-secretase 1 promoter, hence may regulate the proteolytic processing of the amyloid precursor protein (APP). Plays a role in adipocyte differentiation. May be involved in myoblast differentiation into myotubes. Binds the consensus DNA sequence 5'-GGAAAAT-3'. In the presence of CREBBP, activates TNF transcription. Binds to PPARG gene promoter and regulates its activity. Binds to PPARG and REG3G gene promoters. The polypeptide is Nuclear factor of activated T-cells, cytoplasmic 4 (Mus musculus (Mouse)).